The sequence spans 107 residues: Pro-corazonin (107 aa).

The first 21 residues, 1–21 (MVNSQILILFILSLTITIVMC), serve as a signal peptide directing secretion. The residue at position 22 (glutamine 22) is a Pyrrolidone carboxylic acid. The residue at position 32 (asparagine 32) is an Asparagine amide. A propeptide spanning residues 88-107 (SFSENMINDHRQPAPTNNNY) is cleaved from the precursor.

It belongs to the corazonin family. As to expression, in the adult brain, expressed in four neurons of the lateral protocerebrum project axons towards the retrocerebral complex.

It localises to the secreted. Its function is as follows. Cardioactive peptide. Corazonin is probably involved in the physiological regulation of the heart beat. The protein is Pro-corazonin of Apis mellifera (Honeybee).